The following is a 127-amino-acid chain: Probable tautomerase YusQ (127 aa).

Pro-2 acts as the Proton acceptor; via imino nitrogen in catalysis.

Belongs to the 4-oxalocrotonate tautomerase family.

The sequence is that of Probable tautomerase YusQ (yusQ) from Bacillus subtilis (strain 168).